A 93-amino-acid chain; its full sequence is Long neurotoxin 1 (93 aa).

The N-terminal stretch at 1 to 21 (MKTLLLTLVVVTIVCLDLGNS) is a signal peptide. 5 disulfide bridges follow: cysteine 24–cysteine 42, cysteine 35–cysteine 63, cysteine 48–cysteine 52, cysteine 67–cysteine 78, and cysteine 79–cysteine 84.

Belongs to the three-finger toxin family. Long-chain subfamily. Type II alpha-neurotoxin sub-subfamily. As to expression, expressed by the venom gland.

It is found in the secreted. Binds with high affinity to muscular (alpha-1/CHRNA1) and neuronal (alpha-7/CHRNA7) nicotinic acetylcholine receptor (nAChR) and inhibits acetylcholine from binding to the receptor, thereby impairing neuromuscular and neuronal transmission. The polypeptide is Long neurotoxin 1 (Tropidechis carinatus (Australian rough-scaled snake)).